We begin with the raw amino-acid sequence, 586 residues long: Glutamate--tRNA ligase (586 aa).

Positions 114-124 (PNPNGPWHVGH) match the 'HIGH' region motif. Composition is skewed to basic and acidic residues over residues 431–443 (ARGE…HEAV) and 459–468 (HPEHPDRGDR). The disordered stretch occupies residues 431 to 468 (ARGEGPEESHEAVEVPVDDGPDEATPQVHPEHPDRGDR).

This sequence belongs to the class-I aminoacyl-tRNA synthetase family. Glutamate--tRNA ligase type 2 subfamily.

It localises to the cytoplasm. It carries out the reaction tRNA(Glu) + L-glutamate + ATP = L-glutamyl-tRNA(Glu) + AMP + diphosphate. Functionally, catalyzes the attachment of glutamate to tRNA(Glu) in a two-step reaction: glutamate is first activated by ATP to form Glu-AMP and then transferred to the acceptor end of tRNA(Glu). In Halobacterium salinarum (strain ATCC 29341 / DSM 671 / R1), this protein is Glutamate--tRNA ligase.